Consider the following 511-residue polypeptide: Spermatogenesis-associated protein 2 (511 aa).

A PUB domain is found at 77–149; the sequence is ALHCAFSMLE…AYKLKELVES (73 aa). The PIM motif signature appears at 320 to 337; sequence TYFPTQDDVDLYTDSEPR.

This sequence belongs to the SPATA2 family. As to quaternary structure, interacts (via the PIM motif) with RNF31/HOIP (via the PUB domain); the interaction is direct. Interacts (via the PUB domain) with CYLD; the interaction is direct. As to expression, expressed in the testis and to a lesser extent in the brain, while skeletal muscle and kidney show weak expression.

It localises to the cytoplasm. Its subcellular location is the nucleus. Its function is as follows. Bridging factor that mediates the recruitment of CYLD to the LUBAC complex, thereby regulating TNF-alpha-induced necroptosis. Acts as a direct binding intermediate that bridges RNF31/HOIP, the catalytic subunit of the LUBAC complex, and the deubiquitinase (CYLD), thereby recruiting CYLD to the TNF-R1 signaling complex (TNF-RSC). Required to activate the 'Met-1'- (linear) and 'Lys-63'-linked deubiquitinase activities of CYLD. Controls the kinase activity of RIPK1 and TNF-alpha-induced necroptosis by promoting 'Met-1'-linked deubiquitination of RIPK1 by CYLD. This Rattus norvegicus (Rat) protein is Spermatogenesis-associated protein 2.